The sequence spans 705 residues: p-hydroxybenzoic acid--AMP ligase FadD22 (705 aa).

In terms of domain architecture, Carrier spans 541–619 (ERQRLVVDAV…GLAQYLEAEL (79 aa)). Ser-579 is modified (O-(pantetheine 4'-phosphoryl)serine).

The protein belongs to the ATP-dependent AMP-binding enzyme family.

It carries out the reaction holo-[4-hydroxyphenylalkanoate synthase] + 4-hydroxybenzoate + ATP = 4-hydroxyphenyl-[4-hydroxyphenylalkanoate synthase] + AMP + diphosphate. It participates in lipid metabolism; fatty acid biosynthesis. Functionally, catalyzes the adenylation of p-hydroxybenzoic acid (pHBA) to form p-hydroxybenzoic acid-AMP (pHBA-AMP), which is converted directly to p-hydroxybenzoyl-S-FadD22 (pHBA-S-FAdD22) thioester intermediate in a CoA-independent manner by attack of the phosphopantetheine thiol of FadD22. Usually, this intermediate primes the biosynthesis of the phenolphthiocerol (PPOL) by presenting the pHBA starter unit for elongation by Pks15/1, but M.tuberculosis lacks Pks15/1 due to a natural frameshift and thus is unable to produce PPOL. This Mycobacterium tuberculosis (strain CDC 1551 / Oshkosh) protein is p-hydroxybenzoic acid--AMP ligase FadD22 (fadD22).